The chain runs to 273 residues: MRFLVLTGLSGAGKTTARGFLEDLGYFMVDNLPPRLWLPLLQEAAARGLARVGVVVDARALAFFQDLEEVLEALRPTVVYLEARPEVLLRRYNLTRRVHPLGAGNLMREIAEERRALAGLRGRAHLVVDTSELSPRGLKEALARFLGEEGGFLLRLVSFGFKWGPPQEADLVLDVRPLPNPHYDPALRPRTGLDPEVRRYVFSEAAEPYYRALLAVAGLAAEGARAEGRAFYTVAVGCTGGRHRSVAVAERLAEELSGRFAVEVVHRDVEREG.

An ATP-binding site is contributed by 8 to 15 (GLSGAGKT). A GTP-binding site is contributed by 57-60 (DARA).

The protein belongs to the RapZ-like family.

Its function is as follows. Displays ATPase and GTPase activities. This is Nucleotide-binding protein TTHA0319 from Thermus thermophilus (strain ATCC 27634 / DSM 579 / HB8).